The primary structure comprises 126 residues: Small ribosomal subunit protein uS13 (126 aa).

The interval 94–126 (GLPVRGQKTRNNAHTVKGKPKAAIAGKKKNKVN) is disordered. Residues 109–126 (VKGKPKAAIAGKKKNKVN) are compositionally biased toward basic residues.

This sequence belongs to the universal ribosomal protein uS13 family. Part of the 30S ribosomal subunit. Forms a loose heterodimer with protein S19. Forms two bridges to the 50S subunit in the 70S ribosome.

Its function is as follows. Located at the top of the head of the 30S subunit, it contacts several helices of the 16S rRNA. In the 70S ribosome it contacts the 23S rRNA (bridge B1a) and protein L5 of the 50S subunit (bridge B1b), connecting the 2 subunits; these bridges are implicated in subunit movement. Contacts the tRNAs in the A and P-sites. The chain is Small ribosomal subunit protein uS13 from Aster yellows witches'-broom phytoplasma (strain AYWB).